We begin with the raw amino-acid sequence, 443 residues long: MFLAQEIIRKKRNGLALSSEEIQFFVQGITTNSVSEGQIAALGMAVYFNDMNMDERIALTTAMRDSGTVLNWQSLGLNGPVIDKHSTGGVGDVISLMLGPMAAACGGYVPMISGRGLGHTGGTLDKFDAIQGYQTEPSSELFRKVVKEVGVAIIGQTGDLVPADKRFYSIRDNTATVESISLITASILSKKLACNLDALAMDVKVGSGAFMPTYEASEELARSIAAVANGAGTKTTALLTDMNQVLASCAGNAVEVKEAIDFLTGAYRNPRLYEVTMGLCAEMLLLGGLASNEADARAKLNRVLDNGRAAELFGKMVSGLGGPVDFVENYSKYLPQSQIIRPVFADMQGYAYSMDTRELGLAVVTLGGGRRKPGDALDYSVGLTQVCALGDKVDSSTPIAVIHAQSEAAFAEAELAVKKAIHIGETAPEKTPEIYAYIRASDL.

It belongs to the thymidine/pyrimidine-nucleoside phosphorylase family. In terms of assembly, homodimer.

The catalysed reaction is thymidine + phosphate = 2-deoxy-alpha-D-ribose 1-phosphate + thymine. It functions in the pathway pyrimidine metabolism; dTMP biosynthesis via salvage pathway; dTMP from thymine: step 1/2. The enzymes which catalyze the reversible phosphorolysis of pyrimidine nucleosides are involved in the degradation of these compounds and in their utilization as carbon and energy sources, or in the rescue of pyrimidine bases for nucleotide synthesis. The polypeptide is Thymidine phosphorylase (Shewanella baltica (strain OS185)).